Consider the following 240-residue polypeptide: tRNA (guanine-N(1)-)-methyltransferase (240 aa).

S-adenosyl-L-methionine-binding positions include Gly-110 and 129–134 (LGDFVL).

Belongs to the RNA methyltransferase TrmD family. As to quaternary structure, homodimer.

The protein resides in the cytoplasm. It carries out the reaction guanosine(37) in tRNA + S-adenosyl-L-methionine = N(1)-methylguanosine(37) in tRNA + S-adenosyl-L-homocysteine + H(+). Its function is as follows. Specifically methylates guanosine-37 in various tRNAs. The chain is tRNA (guanine-N(1)-)-methyltransferase from Clostridium botulinum (strain ATCC 19397 / Type A).